A 454-amino-acid chain; its full sequence is tRNA modification GTPase MnmE (454 aa).

(6S)-5-formyl-5,6,7,8-tetrahydrofolate-binding residues include Arg-23, Glu-80, and Lys-120. The region spanning 216-377 (GMKVVIAGRP…LRDHLKQSMG (162 aa)) is the TrmE-type G domain. Asn-226 lines the K(+) pocket. Residues 226–231 (NAGKSS), 245–251 (TDIAGTT), 270–273 (DTAG), 335–338 (NKAD), and 358–360 (SAR) contribute to the GTP site. Position 230 (Ser-230) interacts with Mg(2+). Residues Thr-245, Ile-247, and Thr-250 each contribute to the K(+) site. A Mg(2+)-binding site is contributed by Thr-251. Lys-454 is a binding site for (6S)-5-formyl-5,6,7,8-tetrahydrofolate.

The protein belongs to the TRAFAC class TrmE-Era-EngA-EngB-Septin-like GTPase superfamily. TrmE GTPase family. In terms of assembly, homodimer. Heterotetramer of two MnmE and two MnmG subunits. It depends on K(+) as a cofactor.

It localises to the cytoplasm. Its function is as follows. Exhibits a very high intrinsic GTPase hydrolysis rate. Involved in the addition of a carboxymethylaminomethyl (cmnm) group at the wobble position (U34) of certain tRNAs, forming tRNA-cmnm(5)s(2)U34. In Yersinia pestis bv. Antiqua (strain Antiqua), this protein is tRNA modification GTPase MnmE.